The primary structure comprises 138 residues: ATP synthase epsilon chain (138 aa).

It belongs to the ATPase epsilon chain family. F-type ATPases have 2 components, CF(1) - the catalytic core - and CF(0) - the membrane proton channel. CF(1) has five subunits: alpha(3), beta(3), gamma(1), delta(1), epsilon(1). CF(0) has three main subunits: a, b and c.

It is found in the cell inner membrane. In terms of biological role, produces ATP from ADP in the presence of a proton gradient across the membrane. The chain is ATP synthase epsilon chain from Trichlorobacter lovleyi (strain ATCC BAA-1151 / DSM 17278 / SZ) (Geobacter lovleyi).